A 116-amino-acid chain; its full sequence is U16-barytoxin-Tl1c (116 aa).

The signal sequence occupies residues 1-20 (MKTIIVFLSLLVLATKFGDA). Positions 21 to 74 (NEGVNQEQMKEVIQNEFREDFLNEMAAMSLLQQLEAIESTLLEKEADRNSRQKR) are excised as a propeptide. 3 disulfides stabilise this stretch: Cys-75-Cys-90, Cys-82-Cys-95, and Cys-89-Cys-110.

Belongs to the neurotoxin 14 (magi-1) family. 06 (ICK-Trit) subfamily. Expressed by the venom gland.

It localises to the secreted. Its function is as follows. Ion channel inhibitor. The chain is U16-barytoxin-Tl1c from Trittame loki (Brush-footed trapdoor spider).